The primary structure comprises 203 residues: dITP/XTP pyrophosphatase (203 aa).

8-13 is a substrate binding site; the sequence is TANKGK. Mg(2+) is bound by residues E41 and D70. The Proton acceptor role is filled by D70. Substrate-binding positions include S71, 153 to 156, K176, and 181 to 182; these read FGYD and HR.

It belongs to the HAM1 NTPase family. As to quaternary structure, homodimer. Requires Mg(2+) as cofactor.

The enzyme catalyses XTP + H2O = XMP + diphosphate + H(+). The catalysed reaction is dITP + H2O = dIMP + diphosphate + H(+). It catalyses the reaction ITP + H2O = IMP + diphosphate + H(+). Its function is as follows. Pyrophosphatase that catalyzes the hydrolysis of nucleoside triphosphates to their monophosphate derivatives, with a high preference for the non-canonical purine nucleotides XTP (xanthosine triphosphate), dITP (deoxyinosine triphosphate) and ITP. Seems to function as a house-cleaning enzyme that removes non-canonical purine nucleotides from the nucleotide pool, thus preventing their incorporation into DNA/RNA and avoiding chromosomal lesions. The protein is dITP/XTP pyrophosphatase of Listeria innocua serovar 6a (strain ATCC BAA-680 / CLIP 11262).